Consider the following 350-residue polypeptide: Enoyl-[acyl-carrier-protein] reductase, mitochondrial (350 aa).

Residues 1 to 14 constitute a mitochondrion transit peptide; the sequence is MNSTRNIISLVRRY. Residue Y69 is the Proton donor of the active site. NADP(+) contacts are provided by residues N143, 169-172, 192-194, 261-264, 286-288, and K343; these read NSMV, RDG, YGGM, and FWL.

This sequence belongs to the zinc-containing alcohol dehydrogenase family. Quinone oxidoreductase subfamily. As to quaternary structure, homodimer.

Its subcellular location is the mitochondrion. The catalysed reaction is a 2,3-saturated acyl-[ACP] + NADP(+) = a (2E)-enoyl-[ACP] + NADPH + H(+). Catalyzes the NADPH-dependent reduction of trans-2-enoyl thioesters in mitochondrial fatty acid synthesis (fatty acid synthesis type II). Fatty acid chain elongation in mitochondria uses acyl carrier protein (ACP) as an acyl group carrier, but the enzyme accepts both ACP and CoA thioesters as substrates in vitro. The polypeptide is Enoyl-[acyl-carrier-protein] reductase, mitochondrial (mecr) (Dictyostelium discoideum (Social amoeba)).